We begin with the raw amino-acid sequence, 453 residues long: Ribosomal protein uS12 methylthiotransferase RimO (453 aa).

Residues 5-120 (PKVGFVSLGC…VMQAVHSHLP (116 aa)) enclose the MTTase N-terminal domain. Residues C14, C50, C79, C151, C155, and C158 each contribute to the [4Fe-4S] cluster site. One can recognise a Radical SAM core domain in the interval 137 to 382 (LTPRHYAYLK…MEVAEEVSAN (246 aa)). A TRAM domain is found at 385–453 (QRKVGKTLKV…ADGHDLWGEV (69 aa)).

It belongs to the methylthiotransferase family. RimO subfamily. Requires [4Fe-4S] cluster as cofactor.

It localises to the cytoplasm. The catalysed reaction is L-aspartate(89)-[ribosomal protein uS12]-hydrogen + (sulfur carrier)-SH + AH2 + 2 S-adenosyl-L-methionine = 3-methylsulfanyl-L-aspartate(89)-[ribosomal protein uS12]-hydrogen + (sulfur carrier)-H + 5'-deoxyadenosine + L-methionine + A + S-adenosyl-L-homocysteine + 2 H(+). In terms of biological role, catalyzes the methylthiolation of an aspartic acid residue of ribosomal protein uS12. The sequence is that of Ribosomal protein uS12 methylthiotransferase RimO from Burkholderia cenocepacia (strain HI2424).